A 205-amino-acid chain; its full sequence is Proteasome subunit beta type-3 (205 aa).

The residue at position 2 (S2) is an N-acetylserine. K77 is subject to N6-acetyllysine.

It belongs to the peptidase T1B family. The 26S proteasome consists of a 20S proteasome core and two 19S regulatory subunits. The 20S proteasome core is a barrel-shaped complex made of 28 subunits that are arranged in four stacked rings. The two outer rings are each formed by seven alpha subunits, and the two inner rings are formed by seven beta subunits. The proteolytic activity is exerted by three beta-subunits PSMB5, PSMB6 and PSMB7. As to expression, detected in liver (at protein level).

The protein resides in the cytoplasm. The protein localises to the nucleus. Functionally, non-catalytic component of the 20S core proteasome complex involved in the proteolytic degradation of most intracellular proteins. This complex plays numerous essential roles within the cell by associating with different regulatory particles. Associated with two 19S regulatory particles, forms the 26S proteasome and thus participates in the ATP-dependent degradation of ubiquitinated proteins. The 26S proteasome plays a key role in the maintenance of protein homeostasis by removing misfolded or damaged proteins that could impair cellular functions, and by removing proteins whose functions are no longer required. Associated with the PA200 or PA28, the 20S proteasome mediates ubiquitin-independent protein degradation. This type of proteolysis is required in several pathways including spermatogenesis (20S-PA200 complex) or generation of a subset of MHC class I-presented antigenic peptides (20S-PA28 complex). The chain is Proteasome subunit beta type-3 (Psmb3) from Mus musculus (Mouse).